The primary structure comprises 484 residues: Arachin Ahy-3 (484 aa).

Residues 1–20 (MAKLLALSVCFCFLVLGASS) form the signal peptide. 2 cysteine pairs are disulfide-bonded: Cys32-Cys65 and Cys108-Cys305. A Cupin type-1 1 domain is found at 35–253 (QRLNAQRPDN…GFQVNEDIVR (219 aa)). The interval 208–233 (QQRSGRQSPKGEEQEQEQENEGGNVF) is disordered. A propeptide spanning residues 295–298 (DFNN) is cleaved from the precursor. In terms of domain architecture, Cupin type-1 2 spans 311-460 (MNIGKSTSAD…SYGLQYEQAR (150 aa)). A propeptide spanning residues 479 to 484 (MIRTVA) is cleaved from the precursor.

Belongs to the 11S seed storage protein (globulins) family. As to quaternary structure, hexamer; each subunit is composed of an acidic and a basic chain derived from a single precursor and linked by a disulfide bond.

This Arachis hypogaea (Peanut) protein is Arachin Ahy-3.